Here is a 266-residue protein sequence, read N- to C-terminus: Glucosamine-6-phosphate deaminase (266 aa).

The active-site Proton acceptor; for enolization step is the Asp72. Asp141 functions as the For ring-opening step in the catalytic mechanism. Residue His143 is the Proton acceptor; for ring-opening step of the active site. The For ring-opening step role is filled by Glu148.

The protein belongs to the glucosamine/galactosamine-6-phosphate isomerase family. NagB subfamily. In terms of assembly, homohexamer.

The enzyme catalyses alpha-D-glucosamine 6-phosphate + H2O = beta-D-fructose 6-phosphate + NH4(+). The protein operates within amino-sugar metabolism; N-acetylneuraminate degradation; D-fructose 6-phosphate from N-acetylneuraminate: step 5/5. Allosterically activated by N-acetylglucosamine 6-phosphate (GlcNAc6P). In terms of biological role, catalyzes the reversible isomerization-deamination of glucosamine 6-phosphate (GlcN6P) to form fructose 6-phosphate (Fru6P) and ammonium ion. The protein is Glucosamine-6-phosphate deaminase of Aeromonas hydrophila subsp. hydrophila (strain ATCC 7966 / DSM 30187 / BCRC 13018 / CCUG 14551 / JCM 1027 / KCTC 2358 / NCIMB 9240 / NCTC 8049).